The primary structure comprises 861 residues: Leucine--tRNA ligase (861 aa).

The 'HIGH' region signature appears at 42–52 (PYPSGRLHMGH). Residues 619–623 (KMSKS) carry the 'KMSKS' region motif. Lys622 is a binding site for ATP.

It belongs to the class-I aminoacyl-tRNA synthetase family.

Its subcellular location is the cytoplasm. It catalyses the reaction tRNA(Leu) + L-leucine + ATP = L-leucyl-tRNA(Leu) + AMP + diphosphate. The chain is Leucine--tRNA ligase from Haemophilus influenzae (strain ATCC 51907 / DSM 11121 / KW20 / Rd).